The sequence spans 110 residues: Protein YcgL (110 aa).

The YcgL domain maps to 14–98 (MFCVIYRSSK…PPEDLLKQHL (85 aa)). A disordered region spans residues 88–110 (PPPEDLLKQHLSSVGQNTSPADR). Over residues 97–110 (HLSSVGQNTSPADR) the composition is skewed to polar residues.

This Salmonella paratyphi A (strain ATCC 9150 / SARB42) protein is Protein YcgL.